Reading from the N-terminus, the 118-residue chain is Large ribosomal subunit protein bL20 (118 aa).

Belongs to the bacterial ribosomal protein bL20 family.

Binds directly to 23S ribosomal RNA and is necessary for the in vitro assembly process of the 50S ribosomal subunit. It is not involved in the protein synthesizing functions of that subunit. The polypeptide is Large ribosomal subunit protein bL20 (Francisella tularensis subsp. tularensis (strain FSC 198)).